Here is a 409-residue protein sequence, read N- to C-terminus: Multidrug efflux pump Tap (409 aa).

A run of 12 helical transmembrane segments spans residues 10-30, 46-66, 80-98, 104-123, 144-168, 174-193, 218-240, 260-282, 289-308, 313-335, 348-370, and 375-397; these read LLILFAALTAGAGNGITIVAF, IVAMAGTLPLLVATLIAGAAV, LLSALSVAAVPVLALIFGV, AVLAVLAGLGAFFDPAGMTA, SVYEAVFNLGYIVGPGIGGLMIATL, MWVTAGAFCCSILAISVLRL, FVWYTPVLRTLAIVDLVATGLYM, LGWVLMALSIGGLLGALGYAVMS, ATMLTAVITLGVAMTVIAFL, LILVLCAIVGFVYGPIAPIYNYV, VVGVMGSLAYAAGPLGLILAGPL, and GLHATFLALSLPMLLLGVVAVFL.

Belongs to the major facilitator superfamily. Drug:H(+) antiporter-3 (DHA3) (TC 2.A.1.21) family.

Its subcellular location is the cell inner membrane. With respect to regulation, efflux activity is inhibited by carbonyl cyanide m-chlorophenylhydrazone (CCCP) and reserpine, but not by o-vanadate or chlorpromazine (CPZ). Efflux pump that contributes to intrinsic antibiotic resistance. The pump uses the electrochemical gradient as a source of energy. Confers low-level resistance to tetracycline and to several aminoglycosides, including streptomycin, gentamicin, 2'-N-ethylnetilmicin and 6'-N-ethylnetilmicin. The polypeptide is Multidrug efflux pump Tap (Mycolicibacterium fortuitum (Mycobacterium fortuitum)).